Reading from the N-terminus, the 151-residue chain is Ribosome maturation factor RimP (151 aa).

This sequence belongs to the RimP family.

The protein resides in the cytoplasm. Required for maturation of 30S ribosomal subunits. The sequence is that of Ribosome maturation factor RimP from Pasteurella multocida (strain Pm70).